A 121-amino-acid chain; its full sequence is Phospholipase A2 homolog EPL_00195 (121 aa).

7 disulfide bridges follow: C25–C114, C27–C43, C42–C94, C48–C121, C49–C87, C56–C80, and C74–C85. An important for membrane-damaging activities in eukaryotes and bacteria; heparin-binding region spans residues 104–116; that stretch reads KKYRIYPNFLCRG.

The protein belongs to the phospholipase A2 family. Group II subfamily. S49 sub-subfamily. As to quaternary structure, monomer. Expressed by the venom gland.

The protein resides in the secreted. Functionally, snake venom phospholipase A2 homolog that lacks enzymatic activity. Shows high myotoxin activities and displays edema-inducing activities. Has cytotoxic activities against HUVEC cells (LC(50)=2.5 uL) and human lung adenocarcinoma A549 cells (LC(50)=2.9 uL). The protein is Phospholipase A2 homolog EPL_00195 of Echis pyramidum leakeyi (Leakey's carpet viper).